The primary structure comprises 143 residues: Methylglyoxal synthase (143 aa).

The region spanning 1–143 (MTVKKIALVA…DYEAYRNRII (143 aa)) is the MGS-like domain. Substrate contacts are provided by residues His-11, Lys-15, 37-40 (TGST), and 57-58 (SG). The active-site Proton donor/acceptor is the Asp-63. Residue His-90 participates in substrate binding.

This sequence belongs to the methylglyoxal synthase family.

The catalysed reaction is dihydroxyacetone phosphate = methylglyoxal + phosphate. Its function is as follows. Catalyzes the formation of methylglyoxal from dihydroxyacetone phosphate. This chain is Methylglyoxal synthase, found in Coxiella burnetii (strain Dugway 5J108-111).